A 382-amino-acid polypeptide reads, in one-letter code: Alkanesulfonate monooxygenase (382 aa).

The protein belongs to the SsuD family.

The enzyme catalyses an alkanesulfonate + FMNH2 + O2 = an aldehyde + FMN + sulfite + H2O + 2 H(+). In terms of biological role, catalyzes the desulfonation of aliphatic sulfonates. The chain is Alkanesulfonate monooxygenase from Pseudomonas putida (strain GB-1).